The sequence spans 415 residues: Carbamoyl phosphate synthase arginine-specific small chain (415 aa).

A mitochondrion-targeting transit peptide spans 1-17; the sequence is MLRFLKPFPLRFGKRFY. Residues S88, G272, and G274 each contribute to the L-glutamine site. The Glutamine amidotransferase type-1 domain maps to 225–412; the sequence is NIAVIDCGVK…IKEAIKYQKS (188 aa). The Nucleophile role is filled by C301. L-glutamine is bound by residues M302, Q305, N343, G345, and Y346. Residues H385 and E387 contribute to the active site.

It belongs to the CarA family. As to quaternary structure, heterodimer composed of 2 chains; the small (or glutamine) chain promotes the hydrolysis of glutamine to ammonia, which is used by the large (or ammonia) chain to synthesize carbamoyl phosphate.

It is found in the mitochondrion. The protein resides in the cytoplasm. The enzyme catalyses hydrogencarbonate + L-glutamine + 2 ATP + H2O = carbamoyl phosphate + L-glutamate + 2 ADP + phosphate + 2 H(+). It catalyses the reaction L-glutamine + H2O = L-glutamate + NH4(+). Its pathway is amino-acid biosynthesis; L-arginine biosynthesis; carbamoyl phosphate from bicarbonate: step 1/1. Functionally, small subunit of the arginine-specific carbamoyl phosphate synthase (CPSase). CPSase catalyzes the formation of carbamoyl phosphate from the ammonia moiety of glutamine, carbonate, and phosphate donated by ATP, the first step of the arginine biosynthetic pathway. The small subunit (glutamine amidotransferase) binds and cleaves glutamine to supply the large subunit with the substrate ammonia. The protein is Carbamoyl phosphate synthase arginine-specific small chain (arg5) of Schizosaccharomyces pombe (strain 972 / ATCC 24843) (Fission yeast).